The sequence spans 282 residues: Pantothenate synthetase (282 aa).

26-33 (MGNLHEGH) serves as a coordination point for ATP. The active-site Proton donor is the His33. Gln57 contributes to the (R)-pantoate binding site. Gln57 contributes to the beta-alanine binding site. 148–151 (GKKD) is an ATP binding site. (R)-pantoate is bound at residue Gln154. 185-188 (LSSR) contributes to the ATP binding site.

Belongs to the pantothenate synthetase family. Homodimer.

It localises to the cytoplasm. The enzyme catalyses (R)-pantoate + beta-alanine + ATP = (R)-pantothenate + AMP + diphosphate + H(+). It participates in cofactor biosynthesis; (R)-pantothenate biosynthesis; (R)-pantothenate from (R)-pantoate and beta-alanine: step 1/1. In terms of biological role, catalyzes the condensation of pantoate with beta-alanine in an ATP-dependent reaction via a pantoyl-adenylate intermediate. This is Pantothenate synthetase from Paracidovorax citrulli (strain AAC00-1) (Acidovorax citrulli).